A 303-amino-acid chain; its full sequence is N-acetyl-D-glucosamine kinase (303 aa).

Residues 4 to 11 and 133 to 140 each bind ATP; these read GFDIGGTK and GVGGGLVL. The Zn(2+) site is built by His157, Cys177, Cys179, and Cys184.

The protein belongs to the ROK (NagC/XylR) family. NagK subfamily.

It catalyses the reaction N-acetyl-D-glucosamine + ATP = N-acetyl-D-glucosamine 6-phosphate + ADP + H(+). The protein operates within cell wall biogenesis; peptidoglycan recycling. Functionally, catalyzes the phosphorylation of N-acetyl-D-glucosamine (GlcNAc) derived from cell-wall degradation, yielding GlcNAc-6-P. The sequence is that of N-acetyl-D-glucosamine kinase from Salmonella heidelberg (strain SL476).